A 379-amino-acid polypeptide reads, in one-letter code: Succinyl-diaminopimelate desuccinylase (379 aa).

Residue histidine 68 participates in Zn(2+) binding. Aspartate 70 is an active-site residue. Aspartate 101 contacts Zn(2+). The Proton acceptor role is filled by glutamate 135. Residues glutamate 136, glutamate 164, and histidine 350 each coordinate Zn(2+).

It belongs to the peptidase M20A family. DapE subfamily. In terms of assembly, homodimer. Requires Zn(2+) as cofactor. The cofactor is Co(2+).

The catalysed reaction is N-succinyl-(2S,6S)-2,6-diaminopimelate + H2O = (2S,6S)-2,6-diaminopimelate + succinate. It participates in amino-acid biosynthesis; L-lysine biosynthesis via DAP pathway; LL-2,6-diaminopimelate from (S)-tetrahydrodipicolinate (succinylase route): step 3/3. Functionally, catalyzes the hydrolysis of N-succinyl-L,L-diaminopimelic acid (SDAP), forming succinate and LL-2,6-diaminopimelate (DAP), an intermediate involved in the bacterial biosynthesis of lysine and meso-diaminopimelic acid, an essential component of bacterial cell walls. In Bordetella bronchiseptica (strain ATCC BAA-588 / NCTC 13252 / RB50) (Alcaligenes bronchisepticus), this protein is Succinyl-diaminopimelate desuccinylase.